A 296-amino-acid chain; its full sequence is MSAHIINGTEIAAAIREEIRSEVTALKAKHGIVPGLATVLVGDDPASHSYVDSKIKMCQNLGIYSEHHPLPQSATNEDLLTLIARLNADPKISGILVQVPLPVQISENLVLNAINPDKDVDGFHPVNVGRMCLGEPCFLPCTPHGVQELLIRSGIKIEGTHVVIVGRSNLVGKPLANILLQKAPGANATVTICHSGTKNLPLITSQADILVSAMGKPKFITADMVRQGAVVIDVGTTCIGYTPEGKRILSGDVDFEAVKEKAFAITPVPKGVGPMTIIMLMLNTLTAAKRAAGLVK.

NADP(+)-binding positions include 166 to 168 (GRS), Ser195, and Thr236.

The protein belongs to the tetrahydrofolate dehydrogenase/cyclohydrolase family. In terms of assembly, homodimer.

The enzyme catalyses (6R)-5,10-methylene-5,6,7,8-tetrahydrofolate + NADP(+) = (6R)-5,10-methenyltetrahydrofolate + NADPH. It catalyses the reaction (6R)-5,10-methenyltetrahydrofolate + H2O = (6R)-10-formyltetrahydrofolate + H(+). It participates in one-carbon metabolism; tetrahydrofolate interconversion. Functionally, catalyzes the oxidation of 5,10-methylenetetrahydrofolate to 5,10-methenyltetrahydrofolate and then the hydrolysis of 5,10-methenyltetrahydrofolate to 10-formyltetrahydrofolate. This is Bifunctional protein FolD from Dehalococcoides mccartyi (strain ATCC BAA-2266 / KCTC 15142 / 195) (Dehalococcoides ethenogenes (strain 195)).